Consider the following 392-residue polypeptide: Succinate--CoA ligase [ADP-forming] subunit beta (392 aa).

In terms of domain architecture, ATP-grasp spans 9–248; the sequence is KDILKKFGVS…TNEEDPFEVE (240 aa). ATP contacts are provided by residues K50, 57–59, E103, M106, and E111; that span reads GRG. Positions 203 and 217 each coordinate Mg(2+). Substrate is bound by residues N268 and 325–327; that span reads GIV.

This sequence belongs to the succinate/malate CoA ligase beta subunit family. As to quaternary structure, heterotetramer of two alpha and two beta subunits. Mg(2+) is required as a cofactor.

The catalysed reaction is succinate + ATP + CoA = succinyl-CoA + ADP + phosphate. It catalyses the reaction GTP + succinate + CoA = succinyl-CoA + GDP + phosphate. Its pathway is carbohydrate metabolism; tricarboxylic acid cycle; succinate from succinyl-CoA (ligase route): step 1/1. Its function is as follows. Succinyl-CoA synthetase functions in the citric acid cycle (TCA), coupling the hydrolysis of succinyl-CoA to the synthesis of either ATP or GTP and thus represents the only step of substrate-level phosphorylation in the TCA. The beta subunit provides nucleotide specificity of the enzyme and binds the substrate succinate, while the binding sites for coenzyme A and phosphate are found in the alpha subunit. The chain is Succinate--CoA ligase [ADP-forming] subunit beta from Chlorobium limicola (strain DSM 245 / NBRC 103803 / 6330).